The following is a 528-amino-acid chain: MFSLQDLCRKNTFFLPNGFNKHTLQLLGLYWKEHGSVHRVEKDNIMIQNELVLSINDALLLAGEEGDTDVVQLLLLWEGNLHYAIIGALKTEKYNLICEYHSQIEDWHILLPMIQDPETFEKCHDLSLQCDFICLLQHAIKYNKLSILVKYKEDLLNIRIRHRVQSLFVLACENRRTEIIEWIGQNLSIPEPDAIFSIAIATKDLELFSLGYKIIFDYMQRQGILQLSNGLRMVVLNRHISMAIDNGLLPFVLETLKHGGNIHRALSYAVSHNRRKILDYLIRQKNIPPNTIERLLYLAVKNQSSRKTLNLLLSYINYKVKNVKKLVEHVVDHNSTLVVTILLEKKINLIDAVLTRLVKHSTYFRVREFIQEFSISPEKFIKIAVREKRNVIIKGISEDIWENPAERITYLKQIVHTIKYESGREFLINIIHTIYQSYSLKPEEILKLARFYVKHNATTHFKDLCKYLWLNRGTESKKLFLECLEIADKKDFPAIKNIVSEYINYLFTAGAITKEEIMQVYTLEYAMY.

ANK repeat units lie at residues 54-83 and 261-291; these read SINDALLLAGEEGDTDVVQLLLLWEGNLHY and NIHRALSYAVSHNRRKILDYLIRQKNIPPNT.

This sequence belongs to the asfivirus MGF 505 family. In terms of assembly, interacts with host STING1. Interacts with host JAK1; this interaction leads to JAK1 degradation. Interacts with host JAK2; this interaction leads to JAK2 degradation. Interacts with host RELA; this interaction inhibits NF-kappa-B promoter activity.

Its subcellular location is the host cytoplasm. Its function is as follows. Plays a role in virus cell tropism, and may be required for efficient virus replication in macrophages. Interferes with host NF-kappa-B promoter activity mediated by TLR8. Mechanistically, inhibits the phosphorylation and subsequent nuclear translocation of host NF-kappa-B RELA subunit downstream of TLR8. Promotes the expression of the autophagy-related protein host ULK1 to degrade host STING and inhibit the interferon response. Also inhibits JAK1- and JAK2-mediated signaling and thus negatively regulates the IFN-gamma signaling. The chain is Protein MGF 505-7R from African swine fever virus (isolate Tick/Malawi/Lil 20-1/1983) (ASFV).